Reading from the N-terminus, the 364-residue chain is uncharacterized protein (364 aa).

Over residues 1–17 (MEPGELMEVDTSQELDE) the composition is skewed to acidic residues. The interval 1–61 (MEPGELMEVD…EEDQSSTETM (61 aa)) is disordered. Basic and acidic residues predominate over residues 19 to 31 (TSAKETDQPKDAQ).

This is an uncharacterized protein from Caenorhabditis elegans.